Here is a 313-residue protein sequence, read N- to C-terminus: Phosphate import ATP-binding protein PstB 2 (313 aa).

Over residues 1–33 (MSDSINTEPSTDTQTNGERTVETTSPSAETTAG) the composition is skewed to polar residues. Residues 1–40 (MSDSINTEPSTDTQTNGERTVETTSPSAETTAGESEEQVR) are disordered. The ABC transporter domain occupies 54–308 (LSVENLDVWY…PESQRVEDYI (255 aa)). An ATP-binding site is contributed by 86-93 (GPSGCGKS).

The protein belongs to the ABC transporter superfamily. Phosphate importer (TC 3.A.1.7) family. The complex is composed of two ATP-binding proteins (PstB), two transmembrane proteins (PstC and PstA) and a solute-binding protein (PstS).

It localises to the cell membrane. It carries out the reaction phosphate(out) + ATP + H2O = ADP + 2 phosphate(in) + H(+). In terms of biological role, part of the ABC transporter complex PstSACB involved in phosphate import. Responsible for energy coupling to the transport system. In Haloarcula marismortui (strain ATCC 43049 / DSM 3752 / JCM 8966 / VKM B-1809) (Halobacterium marismortui), this protein is Phosphate import ATP-binding protein PstB 2.